A 346-amino-acid chain; its full sequence is Uroporphyrinogen decarboxylase (346 aa).

Residues 23–27 (RQAGR), aspartate 73, tyrosine 151, serine 206, and histidine 321 contribute to the substrate site.

This sequence belongs to the uroporphyrinogen decarboxylase family. As to quaternary structure, homodimer.

Its subcellular location is the cytoplasm. It carries out the reaction uroporphyrinogen III + 4 H(+) = coproporphyrinogen III + 4 CO2. The protein operates within porphyrin-containing compound metabolism; protoporphyrin-IX biosynthesis; coproporphyrinogen-III from 5-aminolevulinate: step 4/4. Functionally, catalyzes the decarboxylation of four acetate groups of uroporphyrinogen-III to yield coproporphyrinogen-III. The sequence is that of Uroporphyrinogen decarboxylase from Aliarcobacter butzleri (strain RM4018) (Arcobacter butzleri).